The sequence spans 591 residues: Complement component C8 beta chain (591 aa).

A signal peptide spans 1 to 32 (MKNSRTWAWRAPVELFLLCAALGCLSLPGSRG). Positions 33–54 (ERPHSFGSNAVNKSFAKSRQMR) are excised as a propeptide. The TSP type-1 1 domain occupies 64–117 (DCELSSWSSWTTCDPCQKKRYRYAYLLQPSQFHGEPCNFSDKEVEDCVTNRPCG). 7 disulfide bridges follow: C65–C100, C76–C110, C79–C116, C122–C133, C127–C146, C140–C155, and C162–C200. 2 C-linked (Man) tryptophan glycosylation sites follow: W70 and W73. Residue N101 is glycosylated (N-linked (GlcNAc...) asparagine). One can recognise an LDL-receptor class A domain in the interval 120–157 (VRCEGFVCAQTGRCVNRRLLCNGDNDCGDQSDEANCRR). Residues L138, N141, D143, D145, D151, and E152 each contribute to the Ca(2+) site. The 347-residue stretch at 158-504 (IYKKCQHEMD…EFQKEVSSCH (347 aa)) folds into the MACPF domain. N-linked (GlcNAc...) asparagine glycosylation occurs at N243. 4 beta stranded membrane passes run 252–259 (SGFSFGFK), 262–269 (GIFELGIS), 379–386 (AKNDFKIG), and 392–399 (VYVSLGVS). C378 and C403 form a disulfide bridge. T418 is modified (phosphothreonine). 4 cysteine pairs are disulfide-bonded: C503–C550, C505–C521, C508–C523, and C525–C534. The EGF-like domain occupies 505–535 (CAPCQGNGVPVLKGSRCDCICPVGSQGLACE). One can recognise a TSP type-1 2 domain in the interval 545-591 (DGKWNCWSNWSSCSGRRKTRQRQCNNPPPQNGGSPCSGPASETLDCS). W551 and W554 each carry a C-linked (Man) tryptophan glycan. A disulfide bridge connects residues C557 and C590. The tract at residues 568–591 (CNNPPPQNGGSPCSGPASETLDCS) is disordered.

Belongs to the complement C6/C7/C8/C9 family. In terms of assembly, heterotrimer of 3 chains: alpha (C8A), beta (C8B) and gamma (C8G); the alpha and gamma chains are disulfide bonded. Component of the membrane attack complex (MAC), composed of complement C5b, C6, C7, C8A, C8B, C8G and multiple copies of the pore-forming subunit C9. Post-translationally, N-glycosylated; contains one or two bound glycans. Not O-glycosylated.

The protein resides in the secreted. It localises to the target cell membrane. Membrane attack complex (MAC) assembly is inhibited by CD59, thereby protecting self-cells from damage during complement activation. CD59 acts by binding to the beta-haipins of C8 (C8A and C8B), forming an intermolecular beta-sheet that prevents incorporation of the multiple copies of C9 required for complete formation of the osmolytic pore. MAC assembly is also inhibited by clusterin (CLU) chaperones that inhibit polymerization of C9. In terms of biological role, component of the membrane attack complex (MAC), a multiprotein complex activated by the complement cascade, which inserts into a target cell membrane and forms a pore, leading to target cell membrane rupture and cell lysis. The MAC is initiated by proteolytic cleavage of C5 into complement C5b in response to the classical, alternative, lectin and GZMK complement pathways. The complement pathways consist in a cascade of proteins that leads to phagocytosis and breakdown of pathogens and signaling that strengthens the adaptive immune system. C8B, together with C8A and C8G, inserts into the target membrane, but does not form pores by itself. During MAC assembly, associates with C5b, C6 and C7 to form the C5b8 intermediate complex that inserts into the target membrane and traverses the bilayer increasing membrane rigidity. In Homo sapiens (Human), this protein is Complement component C8 beta chain.